The chain runs to 434 residues: 3-ketoacyl-CoA thiolase A, peroxisomal (434 aa).

The transit peptide at methionine 1 to cysteine 36 directs the protein to the peroxisome. The PTS2-type peroxisomal targeting signal stretch occupies residues methionine 11–cysteine 36. Cysteine 133 acts as the Acyl-thioester intermediate in catalysis. Lysine 183 and lysine 244 each carry N6-acetyllysine. Residues histidine 387 and cysteine 418 each act as proton acceptor in the active site.

Belongs to the thiolase-like superfamily. Thiolase family. Homodimer. Interacts (via PTS2-type peroxisomal targeting signal region) with PEX7; leading to its translocation into peroxisomes.

It localises to the peroxisome. The enzyme catalyses an acyl-CoA + acetyl-CoA = a 3-oxoacyl-CoA + CoA. The catalysed reaction is 2 acetyl-CoA = acetoacetyl-CoA + CoA. It catalyses the reaction tetradecanoyl-CoA + acetyl-CoA = 3-oxohexadecanoyl-CoA + CoA. It carries out the reaction hexanoyl-CoA + acetyl-CoA = 3-oxooctanoyl-CoA + CoA. The enzyme catalyses 3-oxohexadecanedioyl-CoA + CoA = tetradecanedioyl-CoA + acetyl-CoA. The catalysed reaction is 3-oxo-(6Z,9Z,12Z,15Z,18Z,21Z)-tetracosahexaenoyl-CoA + CoA = (4Z,7Z,10Z,13Z,16Z,19Z)-docosahexaenoyl-CoA + acetyl-CoA. It functions in the pathway lipid metabolism; peroxisomal fatty acid beta-oxidation. Functionally, responsible for the thiolytic cleavage of straight chain 3-keto fatty acyl-CoAs (3-oxoacyl-CoAs). Plays an important role in fatty acid peroxisomal beta-oxidation. Catalyzes the cleavage of short, medium, long, and very long straight chain 3-oxoacyl-CoAs. Medium chain straight 3-oxoacyl-CoAs are preferred substrates. This Rattus norvegicus (Rat) protein is 3-ketoacyl-CoA thiolase A, peroxisomal.